The chain runs to 603 residues: Multicopper oxidase MCE (603 aa).

Positions M1–A21 are cleaved as a signal peptide. Residues I30–E144 form the Plastocyanin-like 1 domain. N75 is a glycosylation site (N-linked (GlcNAc...) asparagine). Cu cation contacts are provided by H79, H81, H123, and H125. 10 N-linked (GlcNAc...) asparagine glycosylation sites follow: N155, N180, N235, N256, N272, N275, N388, N394, N413, and N455. Residues L173 to P353 form the Plastocyanin-like 2 domain. The Plastocyanin-like 3 domain maps to L450 to G581. H495 lines the Cu cation pocket. Residues N512 and N595 are each glycosylated (N-linked (GlcNAc...) asparagine).

The protein belongs to the multicopper oxidase family.

The enzyme catalyses 4 monapinone A + O2 = 2 dinapinone A + 2 H2O. It catalyses the reaction 4 monapinone E + O2 = 2 dinapinone E + 2 H2O. Its pathway is secondary metabolite biosynthesis. Its function is as follows. Multicopper oxidase; part of the gene cluster that mediates the biosynthesis of dinapinones DPA1 (or (M)-DPA) and DPA2 (or (P)-DPA), biaryl dihydronaphthopyranones that act in concert as inhibitors of triacylglycerol accumulation in mammalian cells. The first step in the pathway corresponds to the biosynthesis of dihydroxy-decanoyl-CoA by the fungal type I fatty acid synthase (formed by ORF4 and ORF5). The cluster-specific polyketide synthase (ORF7) then accepts and extends dihydroxy-decanoyl-CoA with 6 malonyl-CoA moieties and cyclizes the molecule to produce a putative polyhydroxynaphthopyranone intermediate, which is further methylated by the cluster-specific methyltransferase (ORF1) at 7-OH to produce monapinone A (MPA). MCE catalyzes the regioselective biaryl coupling of monapinone A (MPA) at the 8,8'-positions to afford dimeric atropisomers DPA1 and DPA2 in a ratio of approximately 1:2.5. Monapinone E (MPE) also appears to be a substrate for MCE and provides the atropisomers dinapinones DPE1 (or (M)-DPE) and DPE2 (or (P)-DPE). The polypeptide is Multicopper oxidase MCE (Talaromyces pinophilus (Penicillium pinophilum)).